The following is a 283-amino-acid chain: Acetylglutamate kinase (283 aa).

Substrate contacts are provided by residues 64-65 (GG), Arg86, and Asn179.

This sequence belongs to the acetylglutamate kinase family. ArgB subfamily.

Its subcellular location is the cytoplasm. It carries out the reaction N-acetyl-L-glutamate + ATP = N-acetyl-L-glutamyl 5-phosphate + ADP. It functions in the pathway amino-acid biosynthesis; L-arginine biosynthesis; N(2)-acetyl-L-ornithine from L-glutamate: step 2/4. Functionally, catalyzes the ATP-dependent phosphorylation of N-acetyl-L-glutamate. This is Acetylglutamate kinase from Campylobacter hominis (strain ATCC BAA-381 / DSM 21671 / CCUG 45161 / LMG 19568 / NCTC 13146 / CH001A).